Reading from the N-terminus, the 114-residue chain is Phycoerythrin alpha-1 subunit (114 aa).

(2R,3E)-phycoerythrobilin contacts are provided by aspartate 52, serine 53, glutamate 63, arginine 64, cysteine 67, threonine 72, lysine 74, alanine 75, and lysine 84.

It belongs to the phycoerythrin family. As to quaternary structure, heterotetramer of 2 different alpha chains and 2 identical beta chains which form 2 alpha-beta heterodimers within the heterotetramer. The two alpha-beta heterodimers are rotated to an open configuration in contrast to the closed configuration found in other cryptophyte species due to the insertion of a single amino acid, Asp-65, in a conserved region of the alpha chain. In the open form, the central chromophores are not in physical contact but are separated by a water-filled channel. In terms of processing, contains three phycoerythrobilin chromophores with binding mediated by both the alpha and beta subunits.

It is found in the plastid. Its subcellular location is the chloroplast thylakoid membrane. Its function is as follows. Light-harvesting photosynthetic tetrapyrrole chromophore-protein from the phycobiliprotein complex. The chain is Phycoerythrin alpha-1 subunit from Hemiselmis andersenii (Cryptophyte alga).